The sequence spans 198 residues: Recombination protein RecR (198 aa).

The C4-type zinc-finger motif lies at 57–72; sequence CSVCGHITDKDPCYIC. The Toprim domain maps to 80 to 175; sequence SVLCVVQESK…KVTRIAHGLP (96 aa).

The protein belongs to the RecR family.

In terms of biological role, may play a role in DNA repair. It seems to be involved in an RecBC-independent recombinational process of DNA repair. It may act with RecF and RecO. The sequence is that of Recombination protein RecR from Listeria innocua serovar 6a (strain ATCC BAA-680 / CLIP 11262).